The sequence spans 311 residues: Methionyl-tRNA formyltransferase (311 aa).

Residue 112–115 (SLLP) coordinates (6S)-5,6,7,8-tetrahydrofolate.

The protein belongs to the Fmt family.

It catalyses the reaction L-methionyl-tRNA(fMet) + (6R)-10-formyltetrahydrofolate = N-formyl-L-methionyl-tRNA(fMet) + (6S)-5,6,7,8-tetrahydrofolate + H(+). Its function is as follows. Attaches a formyl group to the free amino group of methionyl-tRNA(fMet). The formyl group appears to play a dual role in the initiator identity of N-formylmethionyl-tRNA by promoting its recognition by IF2 and preventing the misappropriation of this tRNA by the elongation apparatus. The polypeptide is Methionyl-tRNA formyltransferase (Sinorhizobium fredii (strain NBRC 101917 / NGR234)).